The chain runs to 868 residues: Homeobox-leucine zipper protein HOX29 (868 aa).

The segment at residues 9 to 72 (DASKYVRYTP…NRRCREKQRK (64 aa)) is a DNA-binding region (homeobox). Residues 64-106 (RRCREKQRKESSRLQALNRKLTAMNKLLMEENDRLQKQVSQLV) are a coiled coil. Residues 150 to 171 (VTSGHHHQQQQHNVVQPPPRDA) are disordered. The START domain maps to 169–397 (RDASPAGLMS…VAHEDTRSVI (229 aa)).

It belongs to the HD-ZIP homeobox family. Class III subfamily. As to expression, expressed in phloem.

Its subcellular location is the nucleus. Probable transcription factor that may be necessary for the proper patterning of vascular bundles. The polypeptide is Homeobox-leucine zipper protein HOX29 (HOX29) (Oryza sativa subsp. japonica (Rice)).